The following is a 351-amino-acid chain: Phospho-N-acetylmuramoyl-pentapeptide-transferase (351 aa).

Helical transmembrane passes span 17–37 (MAYATIFAFLLSLIVGPHIIL), 62–82 (GIPTMGGILIFFCVFISLVFW), 85–105 (ILNVYFLIIVFVMFGFAFLGF), 130–150 (IIFSFISVSILYYLGGEHVSI), 163–183 (LGVFYIPFGMFILIAASNSFN), 190–210 (GLAIGLSIVITGALIIIAYIT), 230–250 (LVIFLGALLGGSFGFLWFNAY), 254–274 (IMMGDTGSLALGAILGMTALI), 281–301 (FSILAGVFIIETMSVIIQVIV), and 328–348 (QVVIRFWIIGLIFAIIALSTI).

It belongs to the glycosyltransferase 4 family. MraY subfamily. Requires Mg(2+) as cofactor.

The protein resides in the cell inner membrane. It catalyses the reaction UDP-N-acetyl-alpha-D-muramoyl-L-alanyl-gamma-D-glutamyl-meso-2,6-diaminopimeloyl-D-alanyl-D-alanine + di-trans,octa-cis-undecaprenyl phosphate = di-trans,octa-cis-undecaprenyl diphospho-N-acetyl-alpha-D-muramoyl-L-alanyl-D-glutamyl-meso-2,6-diaminopimeloyl-D-alanyl-D-alanine + UMP. Its pathway is cell wall biogenesis; peptidoglycan biosynthesis. Its function is as follows. Catalyzes the initial step of the lipid cycle reactions in the biosynthesis of the cell wall peptidoglycan: transfers peptidoglycan precursor phospho-MurNAc-pentapeptide from UDP-MurNAc-pentapeptide onto the lipid carrier undecaprenyl phosphate, yielding undecaprenyl-pyrophosphoryl-MurNAc-pentapeptide, known as lipid I. The protein is Phospho-N-acetylmuramoyl-pentapeptide-transferase of Borreliella afzelii (strain PKo) (Borrelia afzelii).